The sequence spans 70 residues: uncharacterized protein (70 aa).

One can recognise an HTH cro/C1-type domain in the interval 5–59 (IREFRAKYGMTQEELAKKVGVRRETIVFLEKGKYNPSLRLAYKIARVFNARIEDL). Residues 16–35 (QEELAKKVGVRRETIVFLEK) constitute a DNA-binding region (H-T-H motif).

This is an uncharacterized protein from Archaeoglobus fulgidus (strain ATCC 49558 / DSM 4304 / JCM 9628 / NBRC 100126 / VC-16).